A 526-amino-acid chain; its full sequence is Cytochrome P450 52A5 (526 aa).

A helical membrane pass occupies residues W18–L38. C473 provides a ligand contact to heme.

This sequence belongs to the cytochrome P450 family. It depends on heme as a cofactor.

Its subcellular location is the membrane. Together with an NADPH cytochrome P450 the enzyme system catalyzes the terminal hydroxylation as the first step in the assimilation of alkanes and fatty acids. This Candida maltosa (Yeast) protein is Cytochrome P450 52A5 (CYP52A5).